We begin with the raw amino-acid sequence, 833 residues long: Leucine--tRNA ligase (833 aa).

Positions 41-52 (PYPSGAGLHVGH) match the 'HIGH' region motif. The 'KMSKS' region motif lies at 610-614 (KMSKS). K613 lines the ATP pocket.

This sequence belongs to the class-I aminoacyl-tRNA synthetase family.

It is found in the cytoplasm. It carries out the reaction tRNA(Leu) + L-leucine + ATP = L-leucyl-tRNA(Leu) + AMP + diphosphate. This is Leucine--tRNA ligase from Streptococcus pyogenes serotype M2 (strain MGAS10270).